A 97-amino-acid chain; its full sequence is ESAT-6-like protein EsxS (97 aa).

The protein belongs to the WXG100 family. CFP-10 subfamily. As to quaternary structure, forms a tight complex with EsxR. Exists in heterodimeric and heterotetrameric forms.

Its subcellular location is the secreted. This Mycobacterium tuberculosis (strain ATCC 25618 / H37Rv) protein is ESAT-6-like protein EsxS.